Reading from the N-terminus, the 430-residue chain is uncharacterized protein (430 aa).

A run of 10 helical transmembrane segments spans residues phenylalanine 13 to phenylalanine 33, leucine 47 to alanine 67, valine 88 to isoleucine 108, glycine 138 to methionine 158, leucine 228 to phenylalanine 248, serine 264 to isoleucine 284, isoleucine 296 to valine 316, alanine 319 to methionine 339, phenylalanine 358 to valine 378, and tyrosine 383 to leucine 403.

The protein belongs to the major facilitator superfamily.

The protein localises to the cell membrane. This is an uncharacterized protein from Bacillus subtilis (strain 168).